Reading from the N-terminus, the 102-residue chain is Death-associated protein 1 (102 aa).

A disordered region spans residues 1 to 102; the sequence is MSSPPEGKLE…RTQHIQQPRK (102 aa). Residue Ser2 is modified to N-acetylserine. Ser3 carries the post-translational modification Phosphoserine; by MTOR. The residue at position 29 (Lys29) is an N6-acetyllysine. Basic and acidic residues predominate over residues 32–43; it reads HTGDTKEEKDKD. A Phosphoserine modification is found at Ser49. Phosphoserine; by MTOR is present on Ser51. A Phosphoserine modification is found at Ser91. Polar residues predominate over residues 92–102; that stretch reads PRTQHIQQPRK.

It belongs to the DAP-DAPL1 family. As to quaternary structure, associates with ribosomes; inhibiting translation. Interacts with eiF5a (EIF5A and EIF5A2); inhibiting translation. Phosphorylated. Phosphorylation by MTOR inhibits the suppressive activity of DAP toward autophagy.

Its function is as follows. Ribosome-binding protein involved in ribosome hibernation, a process during which ribosomes are stabilized in an inactive state and preserved from proteasomal degradation. Acts via its association with eiF5a (EIF5A and EIF5A2) at the polypeptide exit tunnel of the ribosome, preventing mRNA translation. Involved in ribosome hibernation in the mature oocyte by preventing mRNA translation, leading to ribosome inactivation. Ribosomes, which are produced in large quantities during oogenesis, are stored and translationally repressed in the oocyte and early embryo. Also acts as a negative regulator of autophagy. Involved in mediating interferon-gamma-induced cell death. The chain is Death-associated protein 1 from Homo sapiens (Human).